The primary structure comprises 99 residues: NADH-quinone oxidoreductase subunit K (99 aa).

Transmembrane regions (helical) follow at residues 3 to 23 (PDNY…GVLL), 28 to 48 (IVMF…FVTF), and 59 to 79 (VVAF…LAII).

The protein belongs to the complex I subunit 4L family. NDH-1 is composed of 14 different subunits. Subunits NuoA, H, J, K, L, M, N constitute the membrane sector of the complex.

Its subcellular location is the cell membrane. It catalyses the reaction a quinone + NADH + 5 H(+)(in) = a quinol + NAD(+) + 4 H(+)(out). Functionally, NDH-1 shuttles electrons from NADH, via FMN and iron-sulfur (Fe-S) centers, to quinones in the respiratory chain. The immediate electron acceptor for the enzyme in this species is believed to be a menaquinone. Couples the redox reaction to proton translocation (for every two electrons transferred, four hydrogen ions are translocated across the cytoplasmic membrane), and thus conserves the redox energy in a proton gradient. The polypeptide is NADH-quinone oxidoreductase subunit K (Mycolicibacterium vanbaalenii (strain DSM 7251 / JCM 13017 / BCRC 16820 / KCTC 9966 / NRRL B-24157 / PYR-1) (Mycobacterium vanbaalenii)).